A 506-amino-acid polypeptide reads, in one-letter code: Tyrosine-protein kinase isoform SRK4 (506 aa).

Composition is skewed to polar residues over residues 1 to 10 and 18 to 31; these read MGSCCSSQDG and AGST…SQSV. The interval 1–53 is disordered; it reads MGSCCSSQDGDGNGKATAGSTVDSHELSQSVKGKIKQPEPKPKPPPQVPPAQD. One can recognise an SH3 domain in the interval 54–116; it reads VKYPIYVGKY…PSNYVAEYKS (63 aa). Residues 122-214 enclose the SH2 domain; the sequence is WFFGQVKRVD…GLCVNLKGPC (93 aa). The Protein kinase domain maps to 240–493; it reads IKLLRGLGAG…TLSWQLEEFF (254 aa). ATP-binding positions include 246–254 and Lys268; that span reads LGAGQFGEV. Asp359 (proton acceptor) is an active-site residue.

The protein belongs to the protein kinase superfamily. Tyr protein kinase family.

It localises to the cytoplasm. It carries out the reaction L-tyrosyl-[protein] + ATP = O-phospho-L-tyrosyl-[protein] + ADP + H(+). This Spongilla lacustris (Freshwater sponge) protein is Tyrosine-protein kinase isoform SRK4 (SRK1).